Here is a 478-residue protein sequence, read N- to C-terminus: Solute carrier family 49 member 4 (478 aa).

The tract at residues 1-27 (MGSGWSSEEEERQPLLGPGLGPAPGAT) is disordered. The Cytoplasmic segment spans residues 1–51 (MGSGWSSEEEERQPLLGPGLGPAPGATRRGREAAAVLPAAGPSPGRVYGRR). A Di-leucine motif; mediates lysosomal localization motif is present at residues 15 to 16 (LL). The helical transmembrane segment at 52-72 (WLVLLLFSLLAFAQGLVWNTW) threads the bilayer. The Lumenal portion of the chain corresponds to 73 to 89 (GPIQNSARQAYSFTGWD). Residues 90-110 (IALLVLWGPIGFLPCFAFMWL) form a helical membrane-spanning segment. Residues 111-117 (LDKRGLR) are Cytoplasmic-facing. A helical membrane pass occupies residues 118-138 (ITVLLTSFLMVLGTGLRCIPV). Residues 139–152 (SDLTLKKRLIHGGQ) are Lumenal-facing. The helical transmembrane segment at 153-173 (ILNGLAGPTVMNAAPFLSTTW) threads the bilayer. The Cytoplasmic portion of the chain corresponds to 174–184 (FSADERATATA). The helical transmembrane segment at 185–205 (IASMLSYLGGACAFLVGPLVV) threads the bilayer. Topologically, residues 206–229 (PAPNGTAPLLTAESSRDHIKDRIE) are lumenal. An N-linked (GlcNAc...) asparagine glycan is attached at Asn-209. The chain crosses the membrane as a helical span at residues 230-250 (TVLYAEFGVVCLIFSATLAYF). Residues 251–281 (PPRPPLPPSVAAASQRLSYRRSFCRLLSNLR) are Cytoplasmic-facing. Residues 282 to 302 (FLMIALAYAIPLGVFAGWSGV) traverse the membrane as a helical segment. Topologically, residues 303-314 (LDLILTPVHVSQ) are lumenal. The helical transmembrane segment at 315–335 (VDAGWIGFWSIVGGCVVGIAM) threads the bilayer. Residues 336–347 (ARFADFIRGMLK) lie on the Cytoplasmic side of the membrane. Residues 348 to 368 (LILLLLFSGATLSSTWFTLTC) form a helical membrane-spanning segment. The Lumenal portion of the chain corresponds to 369–384 (LNSVTHLPLTTVTLYA). Residues 385 to 405 (SCILLGVFLNSSVPIFFELFV) traverse the membrane as a helical segment. Residues 406-414 (ETVYPVPEG) lie on the Cytoplasmic side of the membrane. The helical transmembrane segment at 415 to 435 (ITCGVVTFLSNMFMGVLLFFV) threads the bilayer. Topologically, residues 436–442 (TFYHTEL) are lumenal. Residues 443 to 463 (SWFNWCLPGSCLLSLLLILCF) traverse the membrane as a helical segment. Residues 464–478 (RESYDRLYLDVVVSV) lie on the Cytoplasmic side of the membrane.

It belongs to the major facilitator superfamily. Post-translationally, cleaved in lysosomes by cathepsin L between Leu-214 and Ala-261, generating a N-glycosylated N-terminal and a non-glycosylated C-terminal fragment.

It localises to the lysosome membrane. It carries out the reaction pyridoxine(out) + n H(+)(out) = pyridoxine(in) + n H(+)(in). Functionally, mediates H(+)-dependent pyridoxine transport. This Rattus norvegicus (Rat) protein is Solute carrier family 49 member 4 (Slc49a4).